A 282-amino-acid chain; its full sequence is ATP phosphoribosyltransferase (282 aa).

This sequence belongs to the ATP phosphoribosyltransferase family. Long subfamily. Mg(2+) serves as cofactor.

It is found in the cytoplasm. The enzyme catalyses 1-(5-phospho-beta-D-ribosyl)-ATP + diphosphate = 5-phospho-alpha-D-ribose 1-diphosphate + ATP. It participates in amino-acid biosynthesis; L-histidine biosynthesis; L-histidine from 5-phospho-alpha-D-ribose 1-diphosphate: step 1/9. Feedback inhibited by histidine. In terms of biological role, catalyzes the condensation of ATP and 5-phosphoribose 1-diphosphate to form N'-(5'-phosphoribosyl)-ATP (PR-ATP). Has a crucial role in the pathway because the rate of histidine biosynthesis seems to be controlled primarily by regulation of HisG enzymatic activity. The protein is ATP phosphoribosyltransferase of Haloarcula marismortui (strain ATCC 43049 / DSM 3752 / JCM 8966 / VKM B-1809) (Halobacterium marismortui).